We begin with the raw amino-acid sequence, 441 residues long: Mannose-6-phosphate isomerase 2 (441 aa).

4 residues coordinate Zn(2+): glutamine 131, histidine 133, glutamate 158, and histidine 296. Arginine 315 is an active-site residue.

Belongs to the mannose-6-phosphate isomerase type 1 family. The cofactor is Zn(2+). As to expression, not expressed in any organs under light (at protein level).

The catalysed reaction is D-mannose 6-phosphate = D-fructose 6-phosphate. The protein operates within nucleotide-sugar biosynthesis; GDP-alpha-D-mannose biosynthesis; alpha-D-mannose 1-phosphate from D-fructose 6-phosphate: step 1/2. Inhibited by EDTA, Zn(2+), Cd(2+), DTT, p-chloromercuribenzoate and L-ascorbic acid (AsA). Its function is as follows. Involved in the synthesis of the GDP-mannose and dolichol-phosphate-mannose required for a number of critical mannosyl transfer reactions. In Arabidopsis thaliana (Mouse-ear cress), this protein is Mannose-6-phosphate isomerase 2 (PMI2).